The chain runs to 348 residues: UPF0283 membrane protein PMI1371 (348 aa).

The next 2 membrane-spanning stretches (helical) occupy residues 69–89 (LITV…GQWI) and 99–119 (IALG…GSVI).

Belongs to the UPF0283 family.

It is found in the cell inner membrane. In Proteus mirabilis (strain HI4320), this protein is UPF0283 membrane protein PMI1371.